Consider the following 697-residue polypeptide: Potassium-transporting ATPase ATP-binding subunit (697 aa).

4 helical membrane passes run 55–75 (PIMF…FLPS), 79–99 (SIPG…VLFA), 245–265 (LTLI…YLGF), and 271–291 (VLVA…LSAI). Asp-324 (4-aspartylphosphate intermediate) is an active-site residue. Residues Asp-361, Glu-365, 393–400 (FKAETRMS), and Lys-412 each bind ATP. Mg(2+) contacts are provided by Asp-535 and Asp-539. Transmembrane regions (helical) follow at residues 605–625 (FAII…LNIM), 633–653 (AILS…PLAM), and 677–697 (GGVI…GLFI).

This sequence belongs to the cation transport ATPase (P-type) (TC 3.A.3) family. Type IA subfamily. The system is composed of three essential subunits: KdpA, KdpB and KdpC.

The protein localises to the cell membrane. The enzyme catalyses K(+)(out) + ATP + H2O = K(+)(in) + ADP + phosphate + H(+). Functionally, part of the high-affinity ATP-driven potassium transport (or Kdp) system, which catalyzes the hydrolysis of ATP coupled with the electrogenic transport of potassium into the cytoplasm. This subunit is responsible for energy coupling to the transport system and for the release of the potassium ions to the cytoplasm. The polypeptide is Potassium-transporting ATPase ATP-binding subunit (Bacillus cereus (strain B4264)).